We begin with the raw amino-acid sequence, 795 residues long: Levansucrase (795 aa).

An N-terminal signal peptide occupies residues 1–36 (METKVRKKMYKKGKFWVVATITTAMLTGIGLSSVQA). Polar residues-rich tracts occupy residues 42–66 (TQVS…SAAE) and 112–130 (QAAT…GQTN). Disordered regions lie at residues 42 to 83 (TQVS…NPAA) and 103 to 138 (ESKA…ATKE). Trp245, Asp246, and Ser315 together coordinate sucrose. Asp246 serves as the catalytic Nucleophile. Asp394 is a binding site for Ca(2+). Sucrose is bound by residues Arg399 and Asp400. Gln425, Asn464, and Asp496 together coordinate Ca(2+). A sucrose-binding site is contributed by Glu497. The active-site Proton donor/acceptor is Glu499. Residue Arg517 participates in sucrose binding. The helical transmembrane segment at 774-794 (GNSFFAALLALFSAFCVSIGF) threads the bilayer.

The protein belongs to the glycosyl hydrolase 68 family.

The protein localises to the cell membrane. It localises to the cell surface. The catalysed reaction is [6)-beta-D-fructofuranosyl-(2-&gt;](n) alpha-D-glucopyranoside + sucrose = [6)-beta-D-fructofuranosyl-(2-&gt;](n+1) alpha-D-glucopyranoside + D-glucose. With respect to regulation, ca(2+) may play an important structural role and promote stability of levansucrase. Functionally, catalyzes the synthesis of levan, a fructose polymer, by transferring the fructosyl moiety from sucrose to a growing acceptor molecule. Also displays sucrose hydrolase activity. This Streptococcus mutans serotype c (strain ATCC 700610 / UA159) protein is Levansucrase.